Reading from the N-terminus, the 2175-residue chain is Homeobox protein cut (2175 aa).

2 disordered regions span residues 139 to 170 (NLLA…QQSG) and 249 to 432 (GNVK…GQPA). Low complexity-rich tracts occupy residues 153-169 (LLSA…LQQS) and 249-268 (GNVK…SNNS). Residues 265–343 (SNNSHQDEEE…ENKDAGEASL (79 aa)) are a coiled coil. Positions 271-294 (DEEELDDEEEDEEEDEDEDDEEEN) are enriched in acidic residues. The segment covering 309–320 (QQETRTEPSATT) has biased composition (polar residues). A compositionally biased stretch (low complexity) spans 344–359 (NVSNNHNTTDSNNSCS). Positions 360–374 (RKNNNGGNESEQHVA) are enriched in polar residues. Over residues 384–415 (NNNTNTSNNNNTSNTATSNTNNNNNNNSSSGN) the composition is skewed to low complexity. A coiled-coil region spans residues 433–499 (VLLAAKDKEI…NEALAEATAL (67 aa)). A compositionally biased stretch (low complexity) spans 503–515 (ASTNNNNNSQSSD). Disordered regions lie at residues 503–600 (ASTN…KIKK) and 656–765 (ASDA…NTNA). Over residues 546 to 568 (AEDDEEDEDQAMLVDSEEAEDKP) the composition is skewed to acidic residues. Residues 673–696 (QQQHQHQQQHHQQQHLHQQHHHHL) are compositionally biased toward basic residues. Residues 697-710 (QQQPNSGSNSNPAS) show a composition bias toward low complexity. A compositionally biased stretch (basic residues) spans 714 to 735 (HHGHHLHGHGLLHPSSAHHLHH). The segment covering 738-765 (TESNSNSSTPTAAGNNNGSNNSSSNTNA) has biased composition (low complexity). The segment at residues 877-964 (NMDKYANQAL…VMLLKSLIPK (88 aa)) is a DNA-binding region (CUT 1). 2 disordered regions span residues 1001–1083 (LMKQ…HDDQ) and 1197–1289 (QRSS…EFAA). 2 stretches are compositionally biased toward basic and acidic residues: residues 1009–1030 (QHRE…EDSK) and 1062–1083 (QRER…HDDQ). Residues 1056–1161 (EQAAAQQRER…QQQAAQAQAQ (106 aa)) adopt a coiled-coil conformation. A compositionally biased stretch (low complexity) spans 1249–1282 (GAPPTAAPPTGGASSNSAAPSPLSNSILPPALSS). The CUT 2 DNA-binding region spans 1330 to 1417 (QQQFDMFNNL…VHKLVASQYK (88 aa)). A coiled-coil region spans residues 1463–1522 (AQAQHLMQQMQAAAMSAAMQQQQVAQAQQQAQQAQQAQQHLQQQAQQHLQQQQHLAQQQH). Residues 1507-1540 (AQQHLQQQQHLAQQQHPHQQHHQAAAAAAALHHQ) are compositionally biased toward low complexity. Disordered regions lie at residues 1507-1588 (AQQH…PMLM), 1695-1747 (ERRE…PSKK), 1803-1826 (QVPH…ATPF), 1922-1955 (RSDD…DKTT), 2069-2097 (KQEE…QKLK), and 2113-2175 (SSTG…GWNY). A compositionally biased stretch (gly residues) spans 1564 to 1573 (AQPGGPGGNQ). Residues 1608–1695 (YEMAALTQDL…VERLQLLKNE (88 aa)) constitute a DNA-binding region (CUT 3). A compositionally biased stretch (low complexity) spans 1709–1732 (NQQDNSSDTSSNDTNDFYTSSPGP). Residues 1745 to 1804 (SKKQRVLFSEEQKEALRLAFALDPYPNVGTIEFLANELGLATRTITNWFHNHRMRLKQQV) constitute a DNA-binding region (homeobox). 2 positions are modified to phosphoserine: S1940 and S1944. Residues 2126–2135 (PLAPPPPPPA) show a composition bias toward pro residues. Residues 2136–2175 (ASSSIVSGESTTSSSSSSNTSSSTPAVTTAAATAAAGWNY) are compositionally biased toward low complexity.

This sequence belongs to the CUT homeobox family. As to expression, detected in many cells in the central nervous system, all external sensory organs, some peripheral neurons, and in the non-neural cells of the spiracles and the Malpighian tubules.

The protein localises to the nucleus. Functionally, regulator of cell fate decisions in multiple lineages. Specifically, functions as a determination factor that specifies sensory organ identity in precursor cells. Probably also involved in cell type specification of Malpighian tubules. In absence of cut gene external sensory organs are transformed into chordotonal organs. This chain is Homeobox protein cut (ct), found in Drosophila melanogaster (Fruit fly).